Reading from the N-terminus, the 545-residue chain is RNA-directed RNA polymerase beta chain (545 aa).

Positions 243–373 (RLAQQGSRDG…PNLRKTFTSG (131 aa)) constitute a RdRp catalytic domain.

In terms of assembly, part of the viral RNA-dependent RNA polymerase complex, the other subunits are probably the host ribosomal protein S1, EF-Tu and EF-Ts.

It catalyses the reaction RNA(n) + a ribonucleoside 5'-triphosphate = RNA(n+1) + diphosphate. In terms of biological role, this is the catalytic subunit of the viral RNA-dependent RNA polymerase complex. This complex is involved in viral RNA replication that produces (+)-stranded genomes via a complementary, (-)-stranded intermediate. The sequence is that of RNA-directed RNA polymerase beta chain from Enterobacteria phage fr (Bacteriophage fr).